We begin with the raw amino-acid sequence, 226 residues long: Lipoprotein-releasing system ATP-binding protein LolD (226 aa).

In terms of domain architecture, ABC transporter spans L6–V226. An ATP-binding site is contributed by G42–S49.

Belongs to the ABC transporter superfamily. Lipoprotein translocase (TC 3.A.1.125) family. In terms of assembly, the complex is composed of two ATP-binding proteins (LolD) and two transmembrane proteins (LolC and LolE).

It is found in the cell inner membrane. Its function is as follows. Part of the ABC transporter complex LolCDE involved in the translocation of mature outer membrane-directed lipoproteins, from the inner membrane to the periplasmic chaperone, LolA. Responsible for the formation of the LolA-lipoprotein complex in an ATP-dependent manner. In Paramagnetospirillum magneticum (strain ATCC 700264 / AMB-1) (Magnetospirillum magneticum), this protein is Lipoprotein-releasing system ATP-binding protein LolD.